The following is a 410-amino-acid chain: MECNLGTEHPSTDTWNRSKTEQAVVDAFDESLFGDVASDIGFETSLYSHAVKTAPSPPWVASPKILYQQLIRDLDFSEGPRLLSCLETWNEDLFSCFPINEDLYSDMMVLSPDPDDVISTVSTKDHVEMFNLTTRGSVRLPSPPKQPTGLPAYVQEVQDSFTVELRAREEAYTKLLVTYCKSIIRYLQGTAKRTTIGLNIQNPDQKAYTQLRQSILLRYYREVASLARLLYLHLYLTVTREFSWRLYASQSAHPDVFAALKFTWTERRQFTCAFHPVLCNHGIVLLEGKPLTASALREINYRRRELGLPLVRCGLVEENKSPLVQQPSFSVHLPRSVGFLTHHIKRKLDAYAVKHPQEPRHVRADHPYAKVVENRNYGSSIEAMILAPPSPSEILPGDPPRPPTCGFLTR.

Residues 388–410 (PPSPSEILPGDPPRPPTCGFLTR) are disordered.

The protein belongs to the herpesviridae tegument protein VP16 protein family. In terms of assembly, associates with the VP16-induced complex; binding to host HCFC1 activates VP16 for association with the octamer motif-binding host protein POU2F1, to form a multiprotein-DNA complex responsible for activating transcription of the viral immediate early genes.

The protein resides in the virion tegument. Its subcellular location is the host nucleus. Functionally, transcriptional activator of immediate-early (IE) gene products (alpha genes). Acts as a key activator of lytic infection by initiating the lytic program through the assembly of the transcriptional regulatory VP16-induced complex composed of VP16 and two cellular factors, HCFC1 and POU2F1. VP16-induced complex represents a regulatory switch: when it is on, it promotes IE-gene expression and thus lytic infection, and when it is off, it limits IE-gene transcription favoring latent infection. May play a role in the aggregation of tegument proteins around nucleocapsids during virus morphogenesis. In Varicella-zoster virus (strain Dumas) (HHV-3), this protein is Tegument protein VP16 homolog.